Here is a 285-residue protein sequence, read N- to C-terminus: ATP synthase gamma chain (285 aa).

It belongs to the ATPase gamma chain family. As to quaternary structure, F-type ATPases have 2 components, CF(1) - the catalytic core - and CF(0) - the membrane proton channel. CF(1) has five subunits: alpha(3), beta(3), gamma(1), delta(1), epsilon(1). CF(0) has three main subunits: a, b and c.

It localises to the cell membrane. In terms of biological role, produces ATP from ADP in the presence of a proton gradient across the membrane. The gamma chain is believed to be important in regulating ATPase activity and the flow of protons through the CF(0) complex. This Dehalococcoides mccartyi (strain ATCC BAA-2100 / JCM 16839 / KCTC 5957 / BAV1) protein is ATP synthase gamma chain.